Here is a 426-residue protein sequence, read N- to C-terminus: Cytochrome c biogenesis protein CcsB (426 aa).

3 helical membrane-spanning segments follow: residues 11–31 (LRVA…GTAI), 69–89 (SVWF…CSWR), and 159–179 (VGPL…VWGV).

This sequence belongs to the Ccs1/CcsB family. May interact with CcsA.

The protein resides in the cellular thylakoid membrane. Required during biogenesis of c-type cytochromes (cytochrome c6 and cytochrome f) at the step of heme attachment. The protein is Cytochrome c biogenesis protein CcsB of Synechococcus sp. (strain CC9902).